The chain runs to 529 residues: Snake venom 5'-nucleotidase (529 aa).

A signal peptide is located at residue Gly1. Zn(2+)-binding residues include Asp12 and His14. Cys27 and Cys32 form a disulfide bridge. Asp60, Asn92, His195, and His218 together coordinate Zn(2+). 2 N-linked (GlcNAc...) asparagine glycosylation sites follow: Asn308 and Asn322. 2 disulfides stabilise this stretch: Cys328/Cys333 and Cys340/Cys362. An AMP-binding site is contributed by Arg329. Residues Asn365, Arg370, and Phe393 each coordinate AMP. Cysteines 452 and 455 form a disulfide. AMP-binding residues include Phe476 and Asp482. Residue Ser525 is the site of GPI-anchor amidated serine attachment. Residues 526–529 (AGSL) constitute a propeptide, removed in mature form.

It belongs to the 5'-nucleotidase family. Zn(2+) is required as a cofactor. Post-translationally, venom 5'-nucleotidases (or a part thereof) may be released into the venom via exosome-like vesicles. They may be attached via a GPI anchor to the membrane of these vesicles. Soluble forms of 5'-nucleotidase might be released by cleavage of the ectodomain in the exosome-like vesicles or venom gland cells. Expressed by the venom gland.

The protein resides in the membrane. It carries out the reaction a ribonucleoside 5'-phosphate + H2O = a ribonucleoside + phosphate. Hydrolyzes nucleotides into nucleosides. Snake venom 5'-nucleotidases are widely distributed among venomous snake taxa, but there is a lack of information about their biological activities. They have been shown to inhibit platelet aggregation. This effect may be due to the liberation of inhibitory AMP or adenosine by its action on ADP released upon initiation of aggregation. Venom 5'-nucleotidases are also known to synergistically act in vivo with other toxins like ADPases, phospholipases, and disintegrins to exert a more pronounced anti-coagulant effect. This chain is Snake venom 5'-nucleotidase, found in Naja atra (Chinese cobra).